A 741-amino-acid chain; its full sequence is Cysteine--tRNA ligase, cytoplasmic (741 aa).

Position 46 (Cys-46) interacts with Zn(2+). Residues 48-58 (PTVYDASHMGH) carry the 'HIGH' region motif. A Phosphoserine modification is found at Ser-297. Zn(2+) is bound by residues Cys-340, His-365, and Glu-369. The 'KMSKS' region signature appears at 398–402 (KMSKS). Lys-401 contributes to the ATP binding site. The disordered stretch occupies residues 697–718 (FDENGLPTHDKEGKEVSKGQIK). Positions 704-713 (THDKEGKEVS) are enriched in basic and acidic residues.

The protein belongs to the class-I aminoacyl-tRNA synthetase family. Zn(2+) is required as a cofactor.

It is found in the cytoplasm. The catalysed reaction is tRNA(Cys) + L-cysteine + ATP = L-cysteinyl-tRNA(Cys) + AMP + diphosphate. The chain is Cysteine--tRNA ligase, cytoplasmic from Drosophila melanogaster (Fruit fly).